The sequence spans 1102 residues: Carbamoyl phosphate synthase large chain (1102 aa).

The tract at residues 1 to 408 (MPKRSDIQSV…ALQKALRSLE (408 aa)) is carboxyphosphate synthetic domain. ATP is bound by residues arginine 129, arginine 175, glycine 181, glycine 182, glutamate 214, isoleucine 216, glutamate 221, glycine 247, valine 248, histidine 249, glutamine 291, and glutamate 305. The 198-residue stretch at 137-334 (EAVKEKIGYG…IAKIAAKLAV (198 aa)) folds into the ATP-grasp 1 domain. The Mg(2+) site is built by glutamine 291, glutamate 305, and asparagine 307. Residues glutamine 291, glutamate 305, and asparagine 307 each coordinate Mn(2+). Positions 409–551 (KKGSQFAFTG…YFYSSYDEES (143 aa)) are oligomerization domain. Positions 552-954 (EVAPRTKPAV…AYAKSQAGAY (403 aa)) are carbamoyl phosphate synthetic domain. One can recognise an ATP-grasp 2 domain in the interval 682–873 (GRVLAEAGLP…LAKAAARISL (192 aa)). Residues arginine 718, arginine 757, leucine 759, glutamate 764, glycine 789, isoleucine 790, histidine 791, serine 792, glutamine 832, and glutamate 844 each coordinate ATP. Mg(2+) is bound by residues glutamine 832, glutamate 844, and asparagine 846. Residues glutamine 832, glutamate 844, and asparagine 846 each contribute to the Mn(2+) site. An MGS-like domain is found at 955-1100 (GPLPTAGRAF…QEHAEHLTAA (146 aa)). The tract at residues 955 to 1102 (GPLPTAGRAF…HAEHLTAARD (148 aa)) is allosteric domain.

This sequence belongs to the CarB family. In terms of assembly, composed of two chains; the small (or glutamine) chain promotes the hydrolysis of glutamine to ammonia, which is used by the large (or ammonia) chain to synthesize carbamoyl phosphate. Tetramer of heterodimers (alpha,beta)4. Mg(2+) is required as a cofactor. It depends on Mn(2+) as a cofactor.

The enzyme catalyses hydrogencarbonate + L-glutamine + 2 ATP + H2O = carbamoyl phosphate + L-glutamate + 2 ADP + phosphate + 2 H(+). It carries out the reaction hydrogencarbonate + NH4(+) + 2 ATP = carbamoyl phosphate + 2 ADP + phosphate + 2 H(+). It participates in amino-acid biosynthesis; L-arginine biosynthesis; carbamoyl phosphate from bicarbonate: step 1/1. Its pathway is pyrimidine metabolism; UMP biosynthesis via de novo pathway; (S)-dihydroorotate from bicarbonate: step 1/3. In terms of biological role, large subunit of the glutamine-dependent carbamoyl phosphate synthetase (CPSase). CPSase catalyzes the formation of carbamoyl phosphate from the ammonia moiety of glutamine, carbonate, and phosphate donated by ATP, constituting the first step of 2 biosynthetic pathways, one leading to arginine and/or urea and the other to pyrimidine nucleotides. The large subunit (synthetase) binds the substrates ammonia (free or transferred from glutamine from the small subunit), hydrogencarbonate and ATP and carries out an ATP-coupled ligase reaction, activating hydrogencarbonate by forming carboxy phosphate which reacts with ammonia to form carbamoyl phosphate. The polypeptide is Carbamoyl phosphate synthase large chain (Streptomyces griseus subsp. griseus (strain JCM 4626 / CBS 651.72 / NBRC 13350 / KCC S-0626 / ISP 5235)).